The sequence spans 63 residues: uncharacterized protein (63 aa).

Residues 4 to 24 (LNQFILIFLLLIVILFIFFLI) traverse the membrane as a helical segment.

Its subcellular location is the membrane. This is an uncharacterized protein from Invertebrate iridescent virus 6 (IIV-6).